The chain runs to 478 residues: Light-independent protochlorophyllide reductase subunit N (478 aa).

[4Fe-4S] cluster is bound by residues Cys-22, Cys-47, and Cys-107.

The protein belongs to the BchN/ChlN family. Protochlorophyllide reductase is composed of three subunits; ChlL, ChlN and ChlB. Forms a heterotetramer of two ChlB and two ChlN subunits. The cofactor is [4Fe-4S] cluster.

Its subcellular location is the plastid. The protein localises to the chloroplast. It catalyses the reaction chlorophyllide a + oxidized 2[4Fe-4S]-[ferredoxin] + 2 ADP + 2 phosphate = protochlorophyllide a + reduced 2[4Fe-4S]-[ferredoxin] + 2 ATP + 2 H2O. The protein operates within porphyrin-containing compound metabolism; chlorophyll biosynthesis (light-independent). Its function is as follows. Component of the dark-operative protochlorophyllide reductase (DPOR) that uses Mg-ATP and reduced ferredoxin to reduce ring D of protochlorophyllide (Pchlide) to form chlorophyllide a (Chlide). This reaction is light-independent. The NB-protein (ChlN-ChlB) is the catalytic component of the complex. The sequence is that of Light-independent protochlorophyllide reductase subunit N from Chlorokybus atmophyticus (Soil alga).